The following is a 306-amino-acid chain: tRNA dimethylallyltransferase (306 aa).

9-16 (GPTAVGKT) serves as a coordination point for ATP. 11 to 16 (TAVGKT) lines the substrate pocket. The interval 34 to 37 (DSRQ) is interaction with substrate tRNA.

The protein belongs to the IPP transferase family. Monomer. Mg(2+) serves as cofactor.

It catalyses the reaction adenosine(37) in tRNA + dimethylallyl diphosphate = N(6)-dimethylallyladenosine(37) in tRNA + diphosphate. Its function is as follows. Catalyzes the transfer of a dimethylallyl group onto the adenine at position 37 in tRNAs that read codons beginning with uridine, leading to the formation of N6-(dimethylallyl)adenosine (i(6)A). This Roseiflexus castenholzii (strain DSM 13941 / HLO8) protein is tRNA dimethylallyltransferase.